We begin with the raw amino-acid sequence, 177 residues long: Parathyroid hormone-related protein (177 aa).

An N-terminal signal peptide occupies residues 1–24 (MLRRLVQQWGVAVFLLSYSVPSCG). The propeptide occupies 25-34 (RSVEELGRRL). The tract at residues 57-68 (RFFLHHLIAEIH) is important for receptor binding. A disordered region spans residues 74–177 (ATSEVSPNSK…TSLELNLRRH (104 aa)). Polar residues predominate over residues 76 to 90 (SEVSPNSKPAPNTKN). The Nuclear localization signal motif lies at 108–129 (TNKVETYKEQPLKTPGKKKKGK). Residues 109 to 118 (NKVETYKEQP) are compositionally biased toward basic and acidic residues. Residues 122 to 132 (PGKKKKGKPGK) show a composition bias toward basic residues.

Belongs to the parathyroid hormone family. As to quaternary structure, PTHrP interacts with PTH1R (via N-terminal extracellular domain). Post-translationally, there are several secretory forms, including osteostatin, arising from endoproteolytic cleavage of the initial translation product. Each of these secretory forms is believed to have one or more of its own receptors that mediates the normal paracrine, autocrine and endocrine actions.

It localises to the secreted. The protein resides in the cytoplasm. It is found in the nucleus. Neuroendocrine peptide which is a critical regulator of cellular and organ growth, development, migration, differentiation and survival and of epithelial calcium ion transport. Acts by binding to its receptor, PTH1R, activating G protein-coupled receptor signaling. Regulates endochondral bone development and epithelial-mesenchymal interactions during the formation of the mammary glands and teeth. Required for skeletal homeostasis. Promotes mammary mesenchyme differentiation and bud outgrowth by modulating mesenchymal cell responsiveness to BMPs. Up-regulates BMPR1A expression in the mammary mesenchyme and this increases the sensitivity of these cells to BMPs and allows them to respond to BMP4 in a paracrine and/or autocrine fashion. BMP4 signaling in the mesenchyme, in turn, triggers epithelial outgrowth and augments MSX2 expression, which causes the mammary mesenchyme to inhibit hair follicle formation within the nipple sheath. Its function is as follows. Potent inhibitor of osteoclastic bone resorption. The chain is Parathyroid hormone-related protein (PTHLH) from Canis lupus familiaris (Dog).